Reading from the N-terminus, the 367-residue chain is MSIGVVHEQTITFEAGIRLESGRILAPITLVYELYGTMNADCSNVIMVEHAWTGDAHLAGKRREDDPKPGWWDAIVGPGRLLDTDRYCVLCSNVIGSCYGSTGPASINPRTGKRYNLSFPVITVRDMVRAQELLLDHLGIRRLLCVMGGSMGGMQALEWATQYPERVASVVALATTPRPSPQAISLNAVARWAIYNDPTWKKGEYKHNPKDGLALARGIGHITFLSDESMWQKFERRFSAKDGLFDFFGQFEVERYLNYNGYNFVDRFDANCFLYLAKALDLYDVAWGYESMTDAFSRITAPIQFFAFSSDWLYPPYQTEEMVTCLQGLGKEVEYHLIQSAYGHDAFLLEHETFTPMVRSLLERVAP.

Residues 44–350 (NVIMVEHAWT…AYGHDAFLLE (307 aa)) form the AB hydrolase-1 domain. Ser-150 (nucleophile) is an active-site residue. Residue Arg-217 participates in substrate binding. Catalysis depends on residues Asp-311 and His-344. Asp-345 serves as a coordination point for substrate.

The protein belongs to the AB hydrolase superfamily. MetX family. In terms of assembly, homodimer.

It localises to the cytoplasm. The catalysed reaction is L-homoserine + acetyl-CoA = O-acetyl-L-homoserine + CoA. The protein operates within amino-acid biosynthesis; L-methionine biosynthesis via de novo pathway; O-acetyl-L-homoserine from L-homoserine: step 1/1. In terms of biological role, transfers an acetyl group from acetyl-CoA to L-homoserine, forming acetyl-L-homoserine. In vitro, can also use propionyl-CoA or butiryl-CoA as acyl donor. This is Homoserine O-acetyltransferase from Trichlorobacter lovleyi (strain ATCC BAA-1151 / DSM 17278 / SZ) (Geobacter lovleyi).